The primary structure comprises 549 residues: Chaperonin GroEL (549 aa).

Residues 29–32 (TLGP), lysine 50, 86–90 (DGTTT), glycine 414, 477–479 (NAL), and aspartate 493 contribute to the ATP site.

This sequence belongs to the chaperonin (HSP60) family. In terms of assembly, forms a cylinder of 14 subunits composed of two heptameric rings stacked back-to-back. Interacts with the co-chaperonin GroES.

It is found in the cytoplasm. The enzyme catalyses ATP + H2O + a folded polypeptide = ADP + phosphate + an unfolded polypeptide.. In terms of biological role, together with its co-chaperonin GroES, plays an essential role in assisting protein folding. The GroEL-GroES system forms a nano-cage that allows encapsulation of the non-native substrate proteins and provides a physical environment optimized to promote and accelerate protein folding. The protein is Chaperonin GroEL of Leptospira biflexa serovar Patoc (strain Patoc 1 / Ames).